The sequence spans 173 residues: Shikimate kinase 1 (173 aa).

An ATP-binding site is contributed by 14 to 19; it reads GAGKST. A Mg(2+)-binding site is contributed by Ser18. Residues Asp36, Arg60, and Gly82 each coordinate substrate. ATP is bound at residue Arg120. Residue Arg140 coordinates substrate. Gln157 is a binding site for ATP.

The protein belongs to the shikimate kinase family. Monomer. It depends on Mg(2+) as a cofactor.

It localises to the cytoplasm. The enzyme catalyses shikimate + ATP = 3-phosphoshikimate + ADP + H(+). It functions in the pathway metabolic intermediate biosynthesis; chorismate biosynthesis; chorismate from D-erythrose 4-phosphate and phosphoenolpyruvate: step 5/7. In terms of biological role, catalyzes the specific phosphorylation of the 3-hydroxyl group of shikimic acid using ATP as a cosubstrate. In Sodalis glossinidius (strain morsitans), this protein is Shikimate kinase 1.